The sequence spans 262 residues: Acyl-[acyl-carrier-protein]--UDP-N-acetylglucosamine O-acyltransferase (262 aa).

Belongs to the transferase hexapeptide repeat family. LpxA subfamily. As to quaternary structure, homotrimer.

The protein resides in the cytoplasm. It catalyses the reaction a (3R)-hydroxyacyl-[ACP] + UDP-N-acetyl-alpha-D-glucosamine = a UDP-3-O-[(3R)-3-hydroxyacyl]-N-acetyl-alpha-D-glucosamine + holo-[ACP]. It participates in glycolipid biosynthesis; lipid IV(A) biosynthesis; lipid IV(A) from (3R)-3-hydroxytetradecanoyl-[acyl-carrier-protein] and UDP-N-acetyl-alpha-D-glucosamine: step 1/6. Its function is as follows. Involved in the biosynthesis of lipid A, a phosphorylated glycolipid that anchors the lipopolysaccharide to the outer membrane of the cell. The protein is Acyl-[acyl-carrier-protein]--UDP-N-acetylglucosamine O-acyltransferase of Burkholderia thailandensis (strain ATCC 700388 / DSM 13276 / CCUG 48851 / CIP 106301 / E264).